Here is a 381-residue protein sequence, read N- to C-terminus: Succinyl-diaminopimelate desuccinylase (381 aa).

Histidine 69 contributes to the Zn(2+) binding site. The active site involves aspartate 71. Aspartate 103 contacts Zn(2+). Glutamate 137 functions as the Proton acceptor in the catalytic mechanism. Glutamate 138, glutamate 166, and histidine 355 together coordinate Zn(2+).

Belongs to the peptidase M20A family. DapE subfamily. As to quaternary structure, homodimer. The cofactor is Zn(2+). Co(2+) is required as a cofactor.

It catalyses the reaction N-succinyl-(2S,6S)-2,6-diaminopimelate + H2O = (2S,6S)-2,6-diaminopimelate + succinate. Its pathway is amino-acid biosynthesis; L-lysine biosynthesis via DAP pathway; LL-2,6-diaminopimelate from (S)-tetrahydrodipicolinate (succinylase route): step 3/3. Catalyzes the hydrolysis of N-succinyl-L,L-diaminopimelic acid (SDAP), forming succinate and LL-2,6-diaminopimelate (DAP), an intermediate involved in the bacterial biosynthesis of lysine and meso-diaminopimelic acid, an essential component of bacterial cell walls. The polypeptide is Succinyl-diaminopimelate desuccinylase (Rickettsia akari (strain Hartford)).